Consider the following 331-residue polypeptide: MWLWEDQGGLLGPFSFLLLVLLLVTRSPVNACLLTGSLFVLLRVFSFEPVPSCRALQVLKPRDRISAIAHRGGSHDAPENTLAAIRQAAKNGATGVELDIEFTSDGIPVLMHDNTVDRTTDGTGRLCDLTFEQIRKLNPAANHRLRNDFPDEKIPTLREAVAECLNHNLTIFFDVKGHAHKATEALKKMYMEFPQLYNNSVVCSFLPEVIYKMRQTDRDVITALTHRPWSLSHTGDGKPRYDTFWKHFIFVMMDILLDWSMHNILWYLCGISAFLMQKDFVSPAYLKKWSAKGIQVVGWTVNTFDEKSYYESHLGSSYITDSMVEDCEPHF.

Topologically, residues 1–3 are cytoplasmic; sequence MWL. Residues 4-24 traverse the membrane as a helical segment; that stretch reads WEDQGGLLGPFSFLLLVLLLV. Residues 25 to 247 are Lumenal-facing; it reads TRSPVNACLL…KPRYDTFWKH (223 aa). The GP-PDE domain maps to 65-331; the sequence is ISAIAHRGGS…SMVEDCEPHF (267 aa). Residues Glu97 and Asp99 each contribute to the Mg(2+) site. Asn168 carries an N-linked (GlcNAc...) asparagine glycan. Asp174 provides a ligand contact to Mg(2+). N-linked (GlcNAc...) asparagine glycosylation is present at Asn198. A helical membrane pass occupies residues 248-268; that stretch reads FIFVMMDILLDWSMHNILWYL. At 269–331 the chain is on the cytoplasmic side; the sequence is CGISAFLMQK…SMVEDCEPHF (63 aa).

The protein belongs to the glycerophosphoryl diester phosphodiesterase family. Interacts with PRAF2. Interacts with RGS16. Requires Mg(2+) as cofactor. N-glycosylated. Widely expressed.

Its subcellular location is the cell membrane. It is found in the cytoplasmic vesicle membrane. The catalysed reaction is sn-glycero-3-phospho-1D-myo-inositol + H2O = myo-inositol + sn-glycerol 3-phosphate + H(+). The enzyme catalyses 1-O-(1Z-octadecenyl)-sn-glycero-3-phospho-(N-5Z,8Z,11Z,14Z-eicosatetraenoyl)-ethanolamine + H2O = 1-O-(1Z-octadecenyl)-sn-glycero-3-phosphate + N-(5Z,8Z,11Z,14Z-eicosatetraenoyl)-ethanolamine + H(+). It catalyses the reaction 1-O-(1Z-octadecenyl)-sn-glycero-3-phospho-(N-9Z-octadecenoyl)-ethanolamine + H2O = 1-O-(1Z-octadecenyl)-sn-glycero-3-phosphate + N-(9Z-octadecenoyl) ethanolamine + H(+). It carries out the reaction 1-O-(1Z-octadecenyl)-sn-glycero-3-phospho-N-hexadecanoyl-ethanolamine + H2O = 1-O-(1Z-octadecenyl)-sn-glycero-3-phosphate + N-hexadecanoylethanolamine + H(+). The catalysed reaction is N-(4Z,7Z,10Z,13Z,16Z,19Z)-docosahexaenoyl-sn-glycero-3-phosphoethanolamine + H2O = N-(4Z,7Z,10Z,13Z,16Z,19Z)-docosahexaenoyl ethanolamine + sn-glycerol 3-phosphate + H(+). The enzyme catalyses N-eicosanoyl-sn-glycero-3-phosphoethanolamine + H2O = N-eicosanoyl ethanolamine + sn-glycerol 3-phosphate + H(+). It catalyses the reaction N-hexadecanoyl-sn-glycero-3-phosphoethanolamine + H2O = N-hexadecanoylethanolamine + sn-glycerol 3-phosphate + H(+). It carries out the reaction N-(9Z-octadecenoyl)-sn-glycero-3-phosphoethanolamine + H2O = N-(9Z-octadecenoyl) ethanolamine + sn-glycerol 3-phosphate + H(+). The catalysed reaction is N-(5Z,8Z,11Z,14Z-eicosatetraenoyl)-sn-glycero-3-phosphoethanolamine + H2O = N-(5Z,8Z,11Z,14Z-eicosatetraenoyl)-ethanolamine + sn-glycerol 3-phosphate + H(+). Inhibited by EDTA, calcium chloride, and zinc chloride. Enhanced by magnesium chloride. Glycerophosphodiester phosphodiesterase activity can be modulated by G-protein signaling pathways. In terms of biological role, hydrolyzes the phosphodiester bond of glycerophosphodiesters such as glycerophosphoinositol (GroPIns) and glycerophosphoethanolamine (GroPEth), to yield a glycerol phosphate and an alcohol. Hydrolyzes glycerophospho-N-acylethanolamines to N-acylethanolamines in the brain and participates in bioactive N-acylethanolamine biosynthesis such as anandamide (an endocannabinoid), N-palmitoylethanolamine (an anti-inflammatory), and N-oleoylethanolamine (an anorexic). In addition, has a lysophospholipase D activity by hydrolyzing N-acyl-lysoplasmenylethanolamine (N-acyl-lysoPlsEt) to N-acylethanolamine. However lysophospholipase D activity is lower than glycerophosphodiester phosphodiesterase activity. Has little or no activity towards glycerophosphocholine. The protein is Glycerophosphodiester phosphodiesterase 1 of Homo sapiens (Human).